The sequence spans 95 residues: uncharacterized protein (95 aa).

3 consecutive transmembrane segments (helical) span residues 3-23 (YTVL…GFSF), 35-55 (ILFL…MMLT), and 63-83 (MLGV…VMII).

It is found in the cell membrane. This is an uncharacterized protein from Mycoplasma pneumoniae (strain ATCC 29342 / M129 / Subtype 1) (Mycoplasmoides pneumoniae).